We begin with the raw amino-acid sequence, 650 residues long: MSILESVHGPRDLDRLTERELDQLAAEVRAFLVANVAKTGGHLGPNLGVVETTIAIHRVFDSPRDAIVFDTGHQSYVHKLLTGRQDFSRLRQKGGLAGYPQRSESEHDIVESSHASSSLSWADGISRAFEMTGQDDRHVVAVVGDGALTGGMTWEALNNISDDNNRRLIIVVNDNGRSYAPTIGGMARFLNTVRTRRSYRSLYLTSRKAFEKLGGPGQSLYRGIRGGLHGFLSRFSDNEALYSNLDIKYIGPVHGHDIGAMEEALRQAKNYGAPVIVHAITQKGRGYEPALRDIADQFHAVGQIDPETGDPIGSPAKPNWTGVFAEEIVALAEENPKLVGITAAMLRPTGLHRFAERFPDRVYDVGIAEQHAVTSAAGLAFGGLHPVVAIYATFMNRAFDQVLMDVALHKAGVTFVLDRAGVTGPDGPSHHGIWDLAILQVVPGIRLAAPRDATRFREELAEAVAVADAPTVLRFPKGSVPADIEAVRRRDDGVDVLHESDQKDVLLVTVGPMAGLGLRVAEALAAQGIGATVVDPRWVVPVPRSVLDLAAGHRIVVTMEDGIRVGGIGTRVRQDLREAGIDTAVDELGLPDEFIDHATRDEILDDAGLTPQKIARDLVAQVLGSRVPIARPLPVEEFTEPSPERKKRRA.

Residues histidine 73 and 113–115 (SHA) each bind thiamine diphosphate. Aspartate 145 contacts Mg(2+). Thiamine diphosphate contacts are provided by residues 146-147 (GA), asparagine 175, tyrosine 287, and glutamate 369. A Mg(2+)-binding site is contributed by asparagine 175.

The protein belongs to the transketolase family. DXPS subfamily. As to quaternary structure, homodimer. Requires Mg(2+) as cofactor. The cofactor is thiamine diphosphate.

It catalyses the reaction D-glyceraldehyde 3-phosphate + pyruvate + H(+) = 1-deoxy-D-xylulose 5-phosphate + CO2. It participates in metabolic intermediate biosynthesis; 1-deoxy-D-xylulose 5-phosphate biosynthesis; 1-deoxy-D-xylulose 5-phosphate from D-glyceraldehyde 3-phosphate and pyruvate: step 1/1. Its function is as follows. Catalyzes the acyloin condensation reaction between C atoms 2 and 3 of pyruvate and glyceraldehyde 3-phosphate to yield 1-deoxy-D-xylulose-5-phosphate (DXP). The chain is 1-deoxy-D-xylulose-5-phosphate synthase from Leifsonia xyli subsp. xyli (strain CTCB07).